Reading from the N-terminus, the 505-residue chain is Catalase (505 aa).

Residues 1–25 (MSQQDKKLTGVFGHPVSDRENSMTA) are disordered. Active-site residues include His56 and Asn129. Heme is bound at residue Tyr339.

It belongs to the catalase family. As to quaternary structure, homodimer. It depends on heme as a cofactor.

It catalyses the reaction 2 H2O2 = O2 + 2 H2O. Functionally, decomposes hydrogen peroxide into water and oxygen; serves to protect cells from the toxic effects of hydrogen peroxide. The sequence is that of Catalase (katA) from Staphylococcus aureus.